The following is a 180-amino-acid chain: Negative modulator of initiation of replication (180 aa).

3 interaction with DNA regions span residues 86-87, 115-119, and 149-155; these read AV, RTRVY, and NTNTGRK.

This sequence belongs to the SeqA family. As to quaternary structure, homodimer. Polymerizes to form helical filaments.

It is found in the cytoplasm. In terms of biological role, negative regulator of replication initiation, which contributes to regulation of DNA replication and ensures that replication initiation occurs exactly once per chromosome per cell cycle. Binds to pairs of hemimethylated GATC sequences in the oriC region, thus preventing assembly of replication proteins and re-initiation at newly replicated origins. Repression is relieved when the region becomes fully methylated. In Salmonella typhimurium (strain LT2 / SGSC1412 / ATCC 700720), this protein is Negative modulator of initiation of replication.